We begin with the raw amino-acid sequence, 353 residues long: Photosystem II protein D1 (353 aa).

Residue Thr2 is modified to N-acetylthreonine. Thr2 carries the post-translational modification Phosphothreonine. 3 consecutive transmembrane segments (helical) span residues 29–46, 118–133, and 142–156; these read YIGW…TATS, HFLL…EWEL, and WIAV…AATA. Residue His118 coordinates chlorophyll a. Tyr126 is a pheophytin a binding site. Residues Asp170 and Glu189 each contribute to the [CaMn4O5] cluster site. A helical membrane pass occupies residues 197–218; it reads FHMLGVAGVFGGSLFSAMHGSL. A chlorophyll a-binding site is contributed by His198. Residues His215 and 264–265 contribute to the a quinone site; that span reads SF. Position 215 (His215) interacts with Fe cation. Position 272 (His272) interacts with Fe cation. Residues 274–288 traverse the membrane as a helical segment; it reads FLAAWPVVGIWFTAL. Residues His332, Glu333, Asp342, and Ala344 each contribute to the [CaMn4O5] cluster site. A propeptide spanning residues 345–353 is cleaved from the precursor; sequence AVEAPSTNG.

Belongs to the reaction center PufL/M/PsbA/D family. PSII is composed of 1 copy each of membrane proteins PsbA, PsbB, PsbC, PsbD, PsbE, PsbF, PsbH, PsbI, PsbJ, PsbK, PsbL, PsbM, PsbT, PsbX, PsbY, PsbZ, Psb30/Ycf12, at least 3 peripheral proteins of the oxygen-evolving complex and a large number of cofactors. It forms dimeric complexes. The D1/D2 heterodimer binds P680, chlorophylls that are the primary electron donor of PSII, and subsequent electron acceptors. It shares a non-heme iron and each subunit binds pheophytin, quinone, additional chlorophylls, carotenoids and lipids. D1 provides most of the ligands for the Mn4-Ca-O5 cluster of the oxygen-evolving complex (OEC). There is also a Cl(-1) ion associated with D1 and D2, which is required for oxygen evolution. The PSII complex binds additional chlorophylls, carotenoids and specific lipids. serves as cofactor. Tyr-161 forms a radical intermediate that is referred to as redox-active TyrZ, YZ or Y-Z. In terms of processing, C-terminally processed by CTPA; processing is essential to allow assembly of the oxygen-evolving complex and thus photosynthetic growth.

It is found in the plastid. The protein resides in the chloroplast thylakoid membrane. It carries out the reaction 2 a plastoquinone + 4 hnu + 2 H2O = 2 a plastoquinol + O2. Its function is as follows. Photosystem II (PSII) is a light-driven water:plastoquinone oxidoreductase that uses light energy to abstract electrons from H(2)O, generating O(2) and a proton gradient subsequently used for ATP formation. It consists of a core antenna complex that captures photons, and an electron transfer chain that converts photonic excitation into a charge separation. The D1/D2 (PsbA/PsbD) reaction center heterodimer binds P680, the primary electron donor of PSII as well as several subsequent electron acceptors. This Lepidium virginicum (Virginia pepperweed) protein is Photosystem II protein D1.